The primary structure comprises 881 residues: Mechanosensitive ion channel protein 4 (881 aa).

Residues 35–245 (FWHNDKSSKP…EEEDPFSEED (211 aa)) are disordered. Positions 56 to 66 (FMRRSSEKSEE) are enriched in basic and acidic residues. Composition is skewed to polar residues over residues 73 to 82 (LINQFLNKQK), 100 to 118 (QKNT…SASP), and 206 to 230 (TPRS…NQGG). The segment covering 234–245 (LEEEEDPFSEED) has biased composition (acidic residues). A run of 4 helical transmembrane segments spans residues 255–275 (ICVW…SLIC), 297–317 (VMVL…KLFV), 339–359 (KPVQ…FLFD), and 377–397 (VLIC…LVKV). A disordered region spans residues 457-501 (GPKAVSSPPQVTVGSGRLQKSPSRVGKSPVLSRSGSKKEGGEEGI). The span at 463–478 (SPPQVTVGSGRLQKSP) shows a compositional bias: polar residues. Over residues 492-501 (SKKEGGEEGI) the composition is skewed to basic and acidic residues. The next 2 membrane-spanning stretches (helical) occupy residues 643-663 (IVDV…LGIA) and 678-698 (VVFV…FVFV).

The protein belongs to the MscS (TC 1.A.23) family.

The protein localises to the membrane. Its function is as follows. Mechanosensitive channel that opens in response to stretch forces in the membrane lipid bilayer. The sequence is that of Mechanosensitive ion channel protein 4 (MSL4) from Arabidopsis thaliana (Mouse-ear cress).